We begin with the raw amino-acid sequence, 523 residues long: 2-isopropylmalate synthase (523 aa).

In terms of domain architecture, Pyruvate carboxyltransferase spans 5–267 (VIIFDTTLRD…HTNINHHEIW (263 aa)). Mn(2+)-binding residues include Asp-14, His-202, His-204, and Asn-238. Residues 392 to 523 (RLDYFSVQSG…QNKENNKETV (132 aa)) are regulatory domain.

It belongs to the alpha-IPM synthase/homocitrate synthase family. LeuA type 1 subfamily. As to quaternary structure, homodimer. Mn(2+) is required as a cofactor.

The protein resides in the cytoplasm. The catalysed reaction is 3-methyl-2-oxobutanoate + acetyl-CoA + H2O = (2S)-2-isopropylmalate + CoA + H(+). It participates in amino-acid biosynthesis; L-leucine biosynthesis; L-leucine from 3-methyl-2-oxobutanoate: step 1/4. Catalyzes the condensation of the acetyl group of acetyl-CoA with 3-methyl-2-oxobutanoate (2-ketoisovalerate) to form 3-carboxy-3-hydroxy-4-methylpentanoate (2-isopropylmalate). The polypeptide is 2-isopropylmalate synthase (Salmonella agona (strain SL483)).